Reading from the N-terminus, the 148-residue chain is Deoxyuridine 5'-triphosphate nucleotidohydrolase (148 aa).

Substrate contacts are provided by residues 67–69 (RSG), asparagine 80, 84–86 (LID), and methionine 94.

Belongs to the dUTPase family. Mg(2+) is required as a cofactor.

The catalysed reaction is dUTP + H2O = dUMP + diphosphate + H(+). It functions in the pathway pyrimidine metabolism; dUMP biosynthesis; dUMP from dCTP (dUTP route): step 2/2. Its function is as follows. This enzyme is involved in nucleotide metabolism: it produces dUMP, the immediate precursor of thymidine nucleotides and it decreases the intracellular concentration of dUTP so that uracil cannot be incorporated into DNA. The chain is Deoxyuridine 5'-triphosphate nucleotidohydrolase from Burkholderia cenocepacia (strain HI2424).